The sequence spans 440 residues: Ribulose bisphosphate carboxylase large chain (440 aa).

Residue Lys4 is modified to N6,N6,N6-trimethyllysine. Asn113 and Thr163 together coordinate substrate. Lys165 functions as the Proton acceptor in the catalytic mechanism. Lys167 serves as a coordination point for substrate. Residues Lys191, Asp193, and Glu194 each coordinate Mg(2+). N6-carboxylysine is present on Lys191. Residue His284 is the Proton acceptor of the active site. Residues Arg285, His317, and Ser369 each contribute to the substrate site.

Belongs to the RuBisCO large chain family. Type I subfamily. In terms of assembly, heterohexadecamer of 8 large chains and 8 small chains; disulfide-linked. The disulfide link is formed within the large subunit homodimers. Requires Mg(2+) as cofactor. In terms of processing, the disulfide bond which can form in the large chain dimeric partners within the hexadecamer appears to be associated with oxidative stress and protein turnover.

The protein resides in the plastid. Its subcellular location is the chloroplast. It carries out the reaction 2 (2R)-3-phosphoglycerate + 2 H(+) = D-ribulose 1,5-bisphosphate + CO2 + H2O. The catalysed reaction is D-ribulose 1,5-bisphosphate + O2 = 2-phosphoglycolate + (2R)-3-phosphoglycerate + 2 H(+). Its function is as follows. RuBisCO catalyzes two reactions: the carboxylation of D-ribulose 1,5-bisphosphate, the primary event in carbon dioxide fixation, as well as the oxidative fragmentation of the pentose substrate in the photorespiration process. Both reactions occur simultaneously and in competition at the same active site. In Dicksonia antarctica (Australian tree fern), this protein is Ribulose bisphosphate carboxylase large chain.